Consider the following 327-residue polypeptide: Putative D-threonate 4-phosphate dehydrogenase (327 aa).

Substrate contacts are provided by His-139 and Thr-140. Residues His-169, His-213, and His-268 each coordinate a divalent metal cation. Lys-276, Asn-285, and Arg-294 together coordinate substrate.

It belongs to the PdxA family. PdxA2 subfamily. Homodimer. A divalent metal cation is required as a cofactor.

It catalyses the reaction 4-O-phospho-D-threonate + NAD(+) = dihydroxyacetone phosphate + CO2 + NADH. Functionally, catalyzes the NAD-dependent oxidation and subsequent decarboxylation of D-threonate 4-phosphate to produce dihydroxyacetone phosphate (DHAP). The protein is Putative D-threonate 4-phosphate dehydrogenase of Salmonella typhi.